The following is a 499-amino-acid chain: Lysine--tRNA ligase (499 aa).

Mg(2+) is bound by residues Glu408 and Glu415.

This sequence belongs to the class-II aminoacyl-tRNA synthetase family. As to quaternary structure, homodimer. Requires Mg(2+) as cofactor.

It localises to the cytoplasm. The enzyme catalyses tRNA(Lys) + L-lysine + ATP = L-lysyl-tRNA(Lys) + AMP + diphosphate. The chain is Lysine--tRNA ligase from Bacillus mycoides (strain KBAB4) (Bacillus weihenstephanensis).